A 299-amino-acid polypeptide reads, in one-letter code: Glycerol-3-phosphate dehydrogenase [NAD(P)+] (299 aa).

The NADPH site is built by Trp-11, Arg-30, His-31, and Lys-79. Sn-glycerol 3-phosphate is bound by residues Lys-79, Gly-107, and Ser-109. NADPH is bound at residue Ala-111. 5 residues coordinate sn-glycerol 3-phosphate: Lys-161, Asp-214, Ser-224, Arg-225, and Asn-226. Catalysis depends on Lys-161, which acts as the Proton acceptor. An NADPH-binding site is contributed by Arg-225. Positions 249 and 251 each coordinate NADPH.

This sequence belongs to the NAD-dependent glycerol-3-phosphate dehydrogenase family.

The protein resides in the cytoplasm. It catalyses the reaction sn-glycerol 3-phosphate + NAD(+) = dihydroxyacetone phosphate + NADH + H(+). The catalysed reaction is sn-glycerol 3-phosphate + NADP(+) = dihydroxyacetone phosphate + NADPH + H(+). It functions in the pathway membrane lipid metabolism; glycerophospholipid metabolism. Its function is as follows. Catalyzes the reduction of the glycolytic intermediate dihydroxyacetone phosphate (DHAP) to sn-glycerol 3-phosphate (G3P), the key precursor for phospholipid synthesis. The sequence is that of Glycerol-3-phosphate dehydrogenase [NAD(P)+] from Nitratiruptor sp. (strain SB155-2).